A 307-amino-acid polypeptide reads, in one-letter code: Recombination-associated protein RdgC (307 aa).

This sequence belongs to the RdgC family.

Its subcellular location is the cytoplasm. It localises to the nucleoid. May be involved in recombination. This chain is Recombination-associated protein RdgC, found in Burkholderia cenocepacia (strain ATCC BAA-245 / DSM 16553 / LMG 16656 / NCTC 13227 / J2315 / CF5610) (Burkholderia cepacia (strain J2315)).